Reading from the N-terminus, the 202-residue chain is MAKEIAKSLLDIEAVTLSPNDLYTWSSGIKSPIYCDNRVTLGYPEVRRAIRDGLSQMIIEQFGNVDIVSGTATAGIPHAAYISEKLNLPMNYVRSKSKSHGKQNQIEGAVSKGKKVVVVEDLISTGGSSITAVEALKDAGADVLGVVAIFTYGLKKADDMFNEIDVPFYTLSNYNELIEVAREEGKISENDIQTLVEWRDNL.

5-phospho-alpha-D-ribose 1-diphosphate is bound by residues Arg94, Lys98, His100, and Glu120–Ser128. Ser124 lines the orotate pocket.

It belongs to the purine/pyrimidine phosphoribosyltransferase family. PyrE subfamily. As to quaternary structure, homodimer. It depends on Mg(2+) as a cofactor.

The catalysed reaction is orotidine 5'-phosphate + diphosphate = orotate + 5-phospho-alpha-D-ribose 1-diphosphate. It functions in the pathway pyrimidine metabolism; UMP biosynthesis via de novo pathway; UMP from orotate: step 1/2. Functionally, catalyzes the transfer of a ribosyl phosphate group from 5-phosphoribose 1-diphosphate to orotate, leading to the formation of orotidine monophosphate (OMP). The protein is Orotate phosphoribosyltransferase of Staphylococcus haemolyticus (strain JCSC1435).